Reading from the N-terminus, the 619-residue chain is Replication restart protein PriA (619 aa).

Residues 119 to 285 form the Helicase ATP-binding domain; sequence LKELQKHPAS…KDKALVRLKG (167 aa). Residue 132–139 participates in ATP binding; the sequence is GDTGSGKT. The DEAH box signature appears at 228–231; the sequence is DEEH. 8 residues coordinate Zn(2+): Cys336, Cys339, Cys345, Cys348, Cys363, Cys366, Cys376, and Cys379. Residues 371–532 form the Helicase C-terminal domain; sequence PIPKICNACQ…ELYPPFSRLC (162 aa).

This sequence belongs to the helicase family. PriA subfamily. In terms of assembly, component of the replication restart primosome. It depends on Zn(2+) as a cofactor.

It catalyses the reaction Couples ATP hydrolysis with the unwinding of duplex DNA by translocating in the 3'-5' direction.. It carries out the reaction ATP + H2O = ADP + phosphate + H(+). In terms of biological role, initiates the restart of stalled replication forks, which reloads the replicative helicase on sites other than the origin of replication. Recognizes and binds to abandoned replication forks and remodels them to uncover a helicase loading site. Promotes assembly of the primosome at these replication forks. This Helicobacter pylori (strain J99 / ATCC 700824) (Campylobacter pylori J99) protein is Replication restart protein PriA.